The primary structure comprises 176 residues: Shikimate kinase (176 aa).

Residue 14–19 (GAGKST) participates in ATP binding. Ser-18 provides a ligand contact to Mg(2+). Positions 36, 60, and 83 each coordinate substrate. Position 121 (Arg-121) interacts with ATP. Substrate is bound at residue Arg-140.

It belongs to the shikimate kinase family. As to quaternary structure, monomer. It depends on Mg(2+) as a cofactor.

Its subcellular location is the cytoplasm. It catalyses the reaction shikimate + ATP = 3-phosphoshikimate + ADP + H(+). It participates in metabolic intermediate biosynthesis; chorismate biosynthesis; chorismate from D-erythrose 4-phosphate and phosphoenolpyruvate: step 5/7. In terms of biological role, catalyzes the specific phosphorylation of the 3-hydroxyl group of shikimic acid using ATP as a cosubstrate. The polypeptide is Shikimate kinase (Francisella philomiragia subsp. philomiragia (strain ATCC 25017 / CCUG 19701 / FSC 153 / O#319-036)).